We begin with the raw amino-acid sequence, 550 residues long: Acidic amino acid decarboxylase GADL1 (550 aa).

Residue lysine 362 is modified to N6-(pyridoxal phosphate)lysine.

This sequence belongs to the group II decarboxylase family. Homodimer. Pyridoxal 5'-phosphate serves as cofactor. In terms of tissue distribution, expressed in skeletal muscles and kidney (at protein level). Expressed in skeletal muscle and weakly in brain. Not expressed in liver or kidney. Expressed in brain, olfactory bulb, liver, muscle and kidney with the highest expression in olfactory bulb and almost not detected in liver (at protein level).

The enzyme catalyses L-aspartate + H(+) = beta-alanine + CO2. The catalysed reaction is 3-sulfino-L-alanine + H(+) = hypotaurine + CO2. It catalyses the reaction L-cysteate + H(+) = taurine + CO2. With respect to regulation, activated weakly by 0.2-0.4 mM Li(+). Inhibited by bis-carboxymethyl-trithiocarbonate, ethylxanthogenacetic acid and 2,5-disulfoaniline. In terms of biological role, catalyzes the decarboxylation of L-aspartate, 3-sulfino-L-alanine (cysteine sulfinic acid), and L-cysteate to beta-alanine, hypotaurine and taurine, respectively. The preferred substrate is L-aspartate. Does not exhibit any decarboxylation activity toward glutamate. The protein is Acidic amino acid decarboxylase GADL1 of Mus musculus (Mouse).